The sequence spans 348 residues: Protein RecA (348 aa).

Gly-68–Thr-75 contacts ATP.

It belongs to the RecA family.

The protein resides in the cytoplasm. Its function is as follows. Can catalyze the hydrolysis of ATP in the presence of single-stranded DNA, the ATP-dependent uptake of single-stranded DNA by duplex DNA, and the ATP-dependent hybridization of homologous single-stranded DNAs. It interacts with LexA causing its activation and leading to its autocatalytic cleavage. The chain is Protein RecA from Rhodococcus opacus (strain B4).